Consider the following 288-residue polypeptide: Homoserine kinase (288 aa).

Position 79–89 (79–89) interacts with ATP; the sequence is PPARGLGSSSA.

The protein belongs to the GHMP kinase family. Homoserine kinase subfamily.

The protein resides in the cytoplasm. It carries out the reaction L-homoserine + ATP = O-phospho-L-homoserine + ADP + H(+). The protein operates within amino-acid biosynthesis; L-threonine biosynthesis; L-threonine from L-aspartate: step 4/5. Catalyzes the ATP-dependent phosphorylation of L-homoserine to L-homoserine phosphate. This chain is Homoserine kinase, found in Listeria monocytogenes serotype 4a (strain HCC23).